The chain runs to 117 residues: Large ribosomal subunit protein bL20 (117 aa).

This sequence belongs to the bacterial ribosomal protein bL20 family.

Its function is as follows. Binds directly to 23S ribosomal RNA and is necessary for the in vitro assembly process of the 50S ribosomal subunit. It is not involved in the protein synthesizing functions of that subunit. The polypeptide is Large ribosomal subunit protein bL20 (Vibrio campbellii (strain ATCC BAA-1116)).